The following is a 259-amino-acid chain: Imidazole glycerol phosphate synthase subunit HisF (259 aa).

Residues aspartate 11 and aspartate 130 contribute to the active site.

It belongs to the HisA/HisF family. As to quaternary structure, heterodimer of HisH and HisF.

It is found in the cytoplasm. The enzyme catalyses 5-[(5-phospho-1-deoxy-D-ribulos-1-ylimino)methylamino]-1-(5-phospho-beta-D-ribosyl)imidazole-4-carboxamide + L-glutamine = D-erythro-1-(imidazol-4-yl)glycerol 3-phosphate + 5-amino-1-(5-phospho-beta-D-ribosyl)imidazole-4-carboxamide + L-glutamate + H(+). Its pathway is amino-acid biosynthesis; L-histidine biosynthesis; L-histidine from 5-phospho-alpha-D-ribose 1-diphosphate: step 5/9. Functionally, IGPS catalyzes the conversion of PRFAR and glutamine to IGP, AICAR and glutamate. The HisF subunit catalyzes the cyclization activity that produces IGP and AICAR from PRFAR using the ammonia provided by the HisH subunit. This is Imidazole glycerol phosphate synthase subunit HisF from Polaromonas naphthalenivorans (strain CJ2).